Consider the following 403-residue polypeptide: Blue light- and temperature-regulated antirepressor BluF (403 aa).

The BLUF domain occupies 2–93; it reads LTTLIYRSHI…ARRFGKAGME (92 aa). Positions 98–144 are joining helix; that stretch reads RLHERDDVLQAVFDKGTSKFQLTYDDRALQFFRTFVLATEQSTYFEI. The 249-residue stretch at 155-403 folds into the EAL domain; that stretch reads DGSDKELDSC…IPSIAWPEKK (249 aa).

In terms of assembly, monomer, it undergoes transient dimerization following photoexcitation or upon temperature reduction, with a relaxation time of about 2 minutes. The dimer may be the inactive state. Interacts with the N- and C-terminal domains of BluR. Can also interact with the C-terminal domain of MlrA. FAD is required as a cofactor.

Functionally, binds to and releases the BluR repressor from its bound DNA target in a blue light-dependent (470 nm) fashion. A shift to low temperature also triggers a BluF-mediated relief of repression by BluR, suggesting BluF may serve as a thermometer. Blue light may act to increase the affinity of BluF for BluR, allowing it to be released from its operator. The protein has a reversible photocycle, and undergoes structural changes, probably in the EAL domain, in response to light. This chain is Blue light- and temperature-regulated antirepressor BluF, found in Escherichia coli (strain K12).